We begin with the raw amino-acid sequence, 274 residues long: N-acetylmuramic acid 6-phosphate etherase (274 aa).

An SIS domain is found at 54-217 (IIPRIDSGGR…STSVMIKLGR (164 aa)). Glutamate 82 serves as the catalytic Proton donor. Glutamate 113 is an active-site residue.

Belongs to the GCKR-like family. MurNAc-6-P etherase subfamily. In terms of assembly, homodimer.

It carries out the reaction N-acetyl-D-muramate 6-phosphate + H2O = N-acetyl-D-glucosamine 6-phosphate + (R)-lactate. Its pathway is amino-sugar metabolism; N-acetylmuramate degradation. Its function is as follows. Specifically catalyzes the cleavage of the D-lactyl ether substituent of MurNAc 6-phosphate, producing GlcNAc 6-phosphate and D-lactate. In Christiangramia forsetii (strain DSM 17595 / CGMCC 1.15422 / KT0803) (Gramella forsetii), this protein is N-acetylmuramic acid 6-phosphate etherase.